The chain runs to 539 residues: Gamma-2-syntrophin (539 aa).

Residues 73–156 (TVTLRRQPVG…DVTITVEYLR (84 aa)) enclose the PDZ domain. In terms of domain architecture, PH spans 296–421 (QVVHMGWVNE…WEKAFQRATF (126 aa)).

It belongs to the syntrophin family. As to quaternary structure, interacts with the dystrophin protein DMD and related proteins DTNA and DTNB.

The protein localises to the cell membrane. The protein resides in the sarcolemma. It is found in the cytoplasm. It localises to the cytoskeleton. In terms of biological role, adapter protein that binds to and probably organizes the subcellular localization of a variety of proteins. May link various receptors to the actin cytoskeleton and the dystrophin glycoprotein complex. This Mus musculus (Mouse) protein is Gamma-2-syntrophin (Sntg2).